The sequence spans 449 residues: Probable aminotransferase TAT1 (449 aa).

Positions 1 to 12 (MNHNSNLVLPSH) are enriched in polar residues. Residues 1–20 (MNHNSNLVLPSHQTETQTQD) are disordered.

Belongs to the class-I pyridoxal-phosphate-dependent aminotransferase family. It depends on pyridoxal 5'-phosphate as a cofactor.

The polypeptide is Probable aminotransferase TAT1 (Arabidopsis thaliana (Mouse-ear cress)).